The primary structure comprises 51 residues: Large ribosomal subunit protein bL33 (51 aa).

The protein belongs to the bacterial ribosomal protein bL33 family.

In Hahella chejuensis (strain KCTC 2396), this protein is Large ribosomal subunit protein bL33.